The sequence spans 187 residues: Elongation factor P (187 aa).

The protein belongs to the elongation factor P family.

The protein resides in the cytoplasm. It functions in the pathway protein biosynthesis; polypeptide chain elongation. In terms of biological role, involved in peptide bond synthesis. Stimulates efficient translation and peptide-bond synthesis on native or reconstituted 70S ribosomes in vitro. Probably functions indirectly by altering the affinity of the ribosome for aminoacyl-tRNA, thus increasing their reactivity as acceptors for peptidyl transferase. In Mycobacterium ulcerans (strain Agy99), this protein is Elongation factor P.